The chain runs to 213 residues: Orotate phosphoribosyltransferase (213 aa).

Residue lysine 26 participates in 5-phospho-alpha-D-ribose 1-diphosphate binding. Phenylalanine 34–phenylalanine 35 is a binding site for orotate. Residues tyrosine 72–lysine 73, arginine 99, lysine 100, lysine 103, histidine 105, and aspartate 124–alanine 132 each bind 5-phospho-alpha-D-ribose 1-diphosphate. The orotate site is built by threonine 128 and arginine 156.

This sequence belongs to the purine/pyrimidine phosphoribosyltransferase family. PyrE subfamily. Homodimer. Requires Mg(2+) as cofactor.

The catalysed reaction is orotidine 5'-phosphate + diphosphate = orotate + 5-phospho-alpha-D-ribose 1-diphosphate. It functions in the pathway pyrimidine metabolism; UMP biosynthesis via de novo pathway; UMP from orotate: step 1/2. Catalyzes the transfer of a ribosyl phosphate group from 5-phosphoribose 1-diphosphate to orotate, leading to the formation of orotidine monophosphate (OMP). In Salmonella agona (strain SL483), this protein is Orotate phosphoribosyltransferase.